We begin with the raw amino-acid sequence, 155 residues long: 6,7-dimethyl-8-ribityllumazine synthase (155 aa).

5-amino-6-(D-ribitylamino)uracil contacts are provided by residues phenylalanine 22, 57-59 (AVE), and 81-83 (TVI). Residue 86–87 (GT) coordinates (2S)-2-hydroxy-3-oxobutyl phosphate. Histidine 89 functions as the Proton donor in the catalytic mechanism. A 5-amino-6-(D-ribitylamino)uracil-binding site is contributed by phenylalanine 114. A (2S)-2-hydroxy-3-oxobutyl phosphate-binding site is contributed by arginine 128.

Belongs to the DMRL synthase family. Forms an icosahedral capsid composed of 60 subunits, arranged as a dodecamer of pentamers.

The catalysed reaction is (2S)-2-hydroxy-3-oxobutyl phosphate + 5-amino-6-(D-ribitylamino)uracil = 6,7-dimethyl-8-(1-D-ribityl)lumazine + phosphate + 2 H2O + H(+). Its pathway is cofactor biosynthesis; riboflavin biosynthesis; riboflavin from 2-hydroxy-3-oxobutyl phosphate and 5-amino-6-(D-ribitylamino)uracil: step 1/2. In terms of biological role, catalyzes the formation of 6,7-dimethyl-8-ribityllumazine by condensation of 5-amino-6-(D-ribitylamino)uracil with 3,4-dihydroxy-2-butanone 4-phosphate. This is the penultimate step in the biosynthesis of riboflavin. This Psychromonas ingrahamii (strain DSM 17664 / CCUG 51855 / 37) protein is 6,7-dimethyl-8-ribityllumazine synthase.